Reading from the N-terminus, the 324-residue chain is 4-hydroxyphenylpyruvate 3-dimethylallyltransferase (324 aa).

Positions 160 and 281 each coordinate substrate.

This sequence belongs to the aromatic prenyltransferase family. In terms of assembly, monomer.

It catalyses the reaction 3-(4-hydroxyphenyl)pyruvate + dimethylallyl diphosphate = 3-dimethylallyl-4-hydroxyphenylpyruvate + diphosphate. It participates in antibiotic biosynthesis. Its function is as follows. Magnesium-independent aromatic prenyltransferase that catalyzes the irreversible transfer of a dimethylallyl group to 4-hydroxyphenylpyruvate to produce the ring A structure in the clorobiocin biosynthesis pathway. Clorobiocin is an aminocoumarin family antibiotic. The polypeptide is 4-hydroxyphenylpyruvate 3-dimethylallyltransferase (Streptomyces roseochromogenus subsp. oscitans).